We begin with the raw amino-acid sequence, 66 residues long: Beta-defensin 13 (66 aa).

The signal sequence occupies residues 1–22 (MRIFSLIVAGLVLLIQLHPAKG). Intrachain disulfides connect Cys-30–Cys-59, Cys-37–Cys-51, and Cys-41–Cys-60.

It belongs to the beta-defensin family.

The protein localises to the secreted. Its function is as follows. Has antibacterial activity. The sequence is that of Beta-defensin 13 (Defb13) from Rattus norvegicus (Rat).